Reading from the N-terminus, the 652-residue chain is Acetyl-coenzyme A synthetase (652 aa).

CoA-binding positions include R189 to K192, T311, and N335. ATP-binding positions include G387 to P389, D411 to T416, D500, and R515. S523 provides a ligand contact to CoA. R526 is a binding site for ATP. 3 residues coordinate Mg(2+): V537, H539, and V542. R584 contacts CoA. At K609 the chain carries N6-acetyllysine.

The protein belongs to the ATP-dependent AMP-binding enzyme family. It depends on Mg(2+) as a cofactor. Acetylated. Deacetylation by the SIR2-homolog deacetylase activates the enzyme.

It carries out the reaction acetate + ATP + CoA = acetyl-CoA + AMP + diphosphate. Catalyzes the conversion of acetate into acetyl-CoA (AcCoA), an essential intermediate at the junction of anabolic and catabolic pathways. AcsA undergoes a two-step reaction. In the first half reaction, AcsA combines acetate with ATP to form acetyl-adenylate (AcAMP) intermediate. In the second half reaction, it can then transfer the acetyl group from AcAMP to the sulfhydryl group of CoA, forming the product AcCoA. The sequence is that of Acetyl-coenzyme A synthetase from Rhizobium rhizogenes (strain K84 / ATCC BAA-868) (Agrobacterium radiobacter).